The following is a 265-amino-acid chain: UPF0354 protein BH3252 (265 aa).

This sequence belongs to the UPF0354 family.

This chain is UPF0354 protein BH3252, found in Halalkalibacterium halodurans (strain ATCC BAA-125 / DSM 18197 / FERM 7344 / JCM 9153 / C-125) (Bacillus halodurans).